The sequence spans 237 residues: 2-C-methyl-D-erythritol 4-phosphate cytidylyltransferase (237 aa).

It belongs to the IspD/TarI cytidylyltransferase family. IspD subfamily. Homodimer.

It carries out the reaction 2-C-methyl-D-erythritol 4-phosphate + CTP + H(+) = 4-CDP-2-C-methyl-D-erythritol + diphosphate. It participates in isoprenoid biosynthesis; isopentenyl diphosphate biosynthesis via DXP pathway; isopentenyl diphosphate from 1-deoxy-D-xylulose 5-phosphate: step 2/6. In terms of biological role, catalyzes the formation of 4-diphosphocytidyl-2-C-methyl-D-erythritol from CTP and 2-C-methyl-D-erythritol 4-phosphate (MEP). This chain is 2-C-methyl-D-erythritol 4-phosphate cytidylyltransferase, found in Pectobacterium atrosepticum (strain SCRI 1043 / ATCC BAA-672) (Erwinia carotovora subsp. atroseptica).